The following is a 219-amino-acid chain: UPF0502 protein Swoo_2055 (219 aa).

Positions 167–195 are disordered; it reads QVKGESVPISEHSRSQREAPSKRQDEMDE. Residues 177-191 are compositionally biased toward basic and acidic residues; sequence EHSRSQREAPSKRQD.

The protein belongs to the UPF0502 family.

In Shewanella woodyi (strain ATCC 51908 / MS32), this protein is UPF0502 protein Swoo_2055.